Here is a 296-residue protein sequence, read N- to C-terminus: Glycine--tRNA ligase alpha subunit (296 aa).

This sequence belongs to the class-II aminoacyl-tRNA synthetase family. Tetramer of two alpha and two beta subunits.

It localises to the cytoplasm. It catalyses the reaction tRNA(Gly) + glycine + ATP = glycyl-tRNA(Gly) + AMP + diphosphate. This Desulfitobacterium hafniense (strain DSM 10664 / DCB-2) protein is Glycine--tRNA ligase alpha subunit.